A 459-amino-acid polypeptide reads, in one-letter code: Chromosomal replication initiator protein DnaA (459 aa).

The tract at residues 1–74 (MQKIETFWHF…DEMAQDHFNE (74 aa)) is domain I, interacts with DnaA modulators. A domain II region spans residues 74 to 122 (ERISFRLELREPAESEAQTVRTSAQKNREDKKPAAEKTQGVTSRKTNPS). Residues 87-122 (ESEAQTVRTSAQKNREDKKPAAEKTQGVTSRKTNPS) form a disordered region. Positions 89–98 (EAQTVRTSAQ) are enriched in polar residues. Positions 99–108 (KNREDKKPAA) are enriched in basic and acidic residues. A compositionally biased stretch (polar residues) spans 112 to 122 (QGVTSRKTNPS). Residues 123-339 (QLNASFTFDA…GALKRVLAFS (217 aa)) are domain III, AAA+ region. Residues Gly167, Gly169, Lys170, and Thr171 each contribute to the ATP site. The segment at 340–459 (RFTGHSISLD…FNALMHILRG (120 aa)) is domain IV, binds dsDNA.

The protein belongs to the DnaA family. As to quaternary structure, oligomerizes as a right-handed, spiral filament on DNA at oriC.

The protein resides in the cytoplasm. Plays an essential role in the initiation and regulation of chromosomal replication. ATP-DnaA binds to the origin of replication (oriC) to initiate formation of the DNA replication initiation complex once per cell cycle. Binds the DnaA box (a 9 base pair repeat at the origin) and separates the double-stranded (ds)DNA. Forms a right-handed helical filament on oriC DNA; dsDNA binds to the exterior of the filament while single-stranded (ss)DNA is stabiized in the filament's interior. The ATP-DnaA-oriC complex binds and stabilizes one strand of the AT-rich DNA unwinding element (DUE), permitting loading of DNA polymerase. After initiation quickly degrades to an ADP-DnaA complex that is not apt for DNA replication. Binds acidic phospholipids. The protein is Chromosomal replication initiator protein DnaA of Nitrosomonas europaea (strain ATCC 19718 / CIP 103999 / KCTC 2705 / NBRC 14298).